A 271-amino-acid polypeptide reads, in one-letter code: tRNA pseudouridine synthase A (271 aa).

Residue aspartate 51 is the Nucleophile of the active site. Substrate is bound at residue tyrosine 109.

The protein belongs to the tRNA pseudouridine synthase TruA family. Homodimer.

The enzyme catalyses uridine(38/39/40) in tRNA = pseudouridine(38/39/40) in tRNA. In terms of biological role, formation of pseudouridine at positions 38, 39 and 40 in the anticodon stem and loop of transfer RNAs. The chain is tRNA pseudouridine synthase A from Methylococcus capsulatus (strain ATCC 33009 / NCIMB 11132 / Bath).